Here is a 228-residue protein sequence, read N- to C-terminus: Ribonuclease 3 (228 aa).

Residues leucine 5 to glycine 127 enclose the RNase III domain. Glutamate 40 contributes to the Mg(2+) binding site. Aspartate 44 is an active-site residue. Positions 113 and 116 each coordinate Mg(2+). Glutamate 116 is a catalytic residue. The DRBM domain maps to aspartate 154–alanine 224.

The protein belongs to the ribonuclease III family. In terms of assembly, homodimer. The cofactor is Mg(2+).

It is found in the cytoplasm. The catalysed reaction is Endonucleolytic cleavage to 5'-phosphomonoester.. Functionally, digests double-stranded RNA. Involved in the processing of primary rRNA transcript to yield the immediate precursors to the large and small rRNAs (23S and 16S). Processes some mRNAs, and tRNAs when they are encoded in the rRNA operon. Processes pre-crRNA and tracrRNA of type II CRISPR loci if present in the organism. In Variovorax paradoxus (strain S110), this protein is Ribonuclease 3.